The sequence spans 196 residues: MVKIGVLGLQGAVREHVKSVEASGAEAVVVKRIEQLEEIDGLILPGGESTTMRRLIDKYAFMEPLRTFAKSGKPMFGTCAGMILLAKTLIGYDEAHIGAMDITVERNAFGRQKDSFEAALSIKGVGEDFVGVFIRAPYVVNVADNVEVLSTHGDRMVAVRQGPFLAASFHPELTDDHRVTAYFVEMVKEAKMKKVV.

An L-glutamine-binding site is contributed by 47–49 (GES). Cysteine 79 acts as the Nucleophile in catalysis. Residues arginine 106 and 134–135 (IR) contribute to the L-glutamine site. Catalysis depends on charge relay system residues histidine 170 and glutamate 172.

Belongs to the glutaminase PdxT/SNO family. In the presence of PdxS, forms a dodecamer of heterodimers. Only shows activity in the heterodimer.

The enzyme catalyses aldehydo-D-ribose 5-phosphate + D-glyceraldehyde 3-phosphate + L-glutamine = pyridoxal 5'-phosphate + L-glutamate + phosphate + 3 H2O + H(+). It catalyses the reaction L-glutamine + H2O = L-glutamate + NH4(+). The protein operates within cofactor biosynthesis; pyridoxal 5'-phosphate biosynthesis. In terms of biological role, catalyzes the hydrolysis of glutamine to glutamate and ammonia as part of the biosynthesis of pyridoxal 5'-phosphate. The resulting ammonia molecule is channeled to the active site of PdxS. In Bacillus cereus (strain Q1), this protein is Pyridoxal 5'-phosphate synthase subunit PdxT.